Consider the following 705-residue polypeptide: Putative membrane protein SCO0839 (705 aa).

Transmembrane regions (helical) follow at residues 16–36 (WLVP…LGPY), 177–197 (GIDG…LLLV), 202–222 (LLPL…CAIV), 237–257 (VQGI…LLLT), 281–301 (SWGA…ALLL), 316–336 (IGIV…LVLL), 373–393 (IWAL…TLSS), 529–549 (LIVP…LRSL), 554–574 (LLVA…ALVF), 587–607 (VPLY…IFLM), 627–647 (LTAT…TFAA), and 648–668 (LGVI…FGVL).

This sequence belongs to the resistance-nodulation-cell division (RND) (TC 2.A.6) family. MmpL subfamily.

The protein resides in the cell membrane. The sequence is that of Putative membrane protein SCO0839 from Streptomyces coelicolor (strain ATCC BAA-471 / A3(2) / M145).